A 548-amino-acid chain; its full sequence is Membrane protein insertase YidC (548 aa).

The chain crosses the membrane as a helical span at residues 6 to 26 (NLLVIALLFVSFMIWQAWEQD). Residues 28-54 (NPQPQTQQTTQTTTTAAGSAADQGVPA) are disordered. Residues 29–42 (PQPQTQQTTQTTTT) show a composition bias toward low complexity. 4 helical membrane-spanning segments follow: residues 350 to 370 (FLGNWGFSIIVITFIVRGIMY), 424 to 444 (FPLIIQMPIFLALYYMLMGSI), 458 to 478 (LSAQDPYYILPILMGVTMFFI), and 499 to 519 (PVIFTVFFLWFPSGLVLYYIV).

It belongs to the OXA1/ALB3/YidC family. Type 1 subfamily. Interacts with the Sec translocase complex via SecD. Specifically interacts with transmembrane segments of nascent integral membrane proteins during membrane integration.

It localises to the cell inner membrane. In terms of biological role, required for the insertion and/or proper folding and/or complex formation of integral membrane proteins into the membrane. Involved in integration of membrane proteins that insert both dependently and independently of the Sec translocase complex, as well as at least some lipoproteins. Aids folding of multispanning membrane proteins. The sequence is that of Membrane protein insertase YidC from Citrobacter koseri (strain ATCC BAA-895 / CDC 4225-83 / SGSC4696).